The following is a 203-amino-acid chain: Glycerol-3-phosphate acyltransferase (203 aa).

The next 5 membrane-spanning stretches (helical) occupy residues 5-25 (VLGL…FGVV), 55-75 (KLGI…ILVA), 88-108 (FTVL…WLGF), 114-134 (VATG…AGAV), and 162-182 (FVAH…AALI).

This sequence belongs to the PlsY family. As to quaternary structure, probably interacts with PlsX.

The protein resides in the cell inner membrane. It catalyses the reaction an acyl phosphate + sn-glycerol 3-phosphate = a 1-acyl-sn-glycero-3-phosphate + phosphate. Its pathway is lipid metabolism; phospholipid metabolism. Catalyzes the transfer of an acyl group from acyl-phosphate (acyl-PO(4)) to glycerol-3-phosphate (G3P) to form lysophosphatidic acid (LPA). This enzyme utilizes acyl-phosphate as fatty acyl donor, but not acyl-CoA or acyl-ACP. This chain is Glycerol-3-phosphate acyltransferase, found in Anaeromyxobacter sp. (strain Fw109-5).